Reading from the N-terminus, the 69-residue chain is Putative membrane protein insertion efficiency factor (69 aa).

It belongs to the UPF0161 family.

It is found in the cell inner membrane. Could be involved in insertion of integral membrane proteins into the membrane. This is Putative membrane protein insertion efficiency factor from Syntrophotalea carbinolica (strain DSM 2380 / NBRC 103641 / GraBd1) (Pelobacter carbinolicus).